A 198-amino-acid polypeptide reads, in one-letter code: Transmembrane protein 9B (198 aa).

The first 33 residues, 1-33, serve as a signal peptide directing secretion; that stretch reads MATLWGGLLRLGSLLSLSCLALSVLLLAQLSDA. N-linked (GlcNAc...) asparagine glycosylation is present at asparagine 60. The chain crosses the membrane as a helical span at residues 105 to 125; it reads IIIYLSILGLLLLYMVYLTLV. A phosphoserine mark is found at serine 142 and serine 189.

This sequence belongs to the TMEM9 family. Post-translationally, N-glycosylated.

The protein resides in the lysosome membrane. The protein localises to the early endosome membrane. Enhances production of pro-inflammatory cytokines induced by TNF, IL1B, and TLR ligands. Has a role in TNF activation of both the NF-kappaB and MAPK pathways. This is Transmembrane protein 9B (TMEM9B) from Homo sapiens (Human).